Reading from the N-terminus, the 611-residue chain is Mitochondrial distribution and morphology protein 34 (611 aa).

Residues Met-1–Leu-195 enclose the SMP-LTD domain. The segment covering Ser-325–Arg-342 has biased composition (polar residues). 4 disordered regions span residues Ser-325–Ser-347, Arg-361–Thr-402, Ser-415–Thr-544, and Ser-587–His-611. Over residues Arg-361–Arg-373 the composition is skewed to basic residues. 2 stretches are compositionally biased toward basic and acidic residues: residues Val-374–Asp-385 and Thr-444–Asn-459. A compositionally biased stretch (pro residues) spans Pro-520–Ile-529.

The protein belongs to the MDM34 family. As to quaternary structure, component of the ER-mitochondria encounter structure (ERMES) or MDM complex, composed of MMM1, MDM10, MDM12 and MDM34.

Its subcellular location is the mitochondrion outer membrane. Component of the ERMES/MDM complex, which serves as a molecular tether to connect the endoplasmic reticulum (ER) and mitochondria. Components of this complex are involved in the control of mitochondrial shape and protein biogenesis, and function in nonvesicular lipid trafficking between the ER and mitochondria. MDM34 is required for the interaction of the ER-resident membrane protein MMM1 and the outer mitochondrial membrane-resident beta-barrel protein MDM10. The polypeptide is Mitochondrial distribution and morphology protein 34 (Paracoccidioides brasiliensis (strain Pb18)).